The following is a 283-amino-acid chain: Pantothenate synthetase (283 aa).

30–37 (MGALHEGH) lines the ATP pocket. The active-site Proton donor is the H37. Q61 contributes to the (R)-pantoate binding site. Q61 contributes to the beta-alanine binding site. 147–150 (GMKD) serves as a coordination point for ATP. Position 153 (Q153) interacts with (R)-pantoate. ATP-binding positions include V176 and 184–187 (LSSR).

The protein belongs to the pantothenate synthetase family. In terms of assembly, homodimer.

It localises to the cytoplasm. It catalyses the reaction (R)-pantoate + beta-alanine + ATP = (R)-pantothenate + AMP + diphosphate + H(+). Its pathway is cofactor biosynthesis; (R)-pantothenate biosynthesis; (R)-pantothenate from (R)-pantoate and beta-alanine: step 1/1. In terms of biological role, catalyzes the condensation of pantoate with beta-alanine in an ATP-dependent reaction via a pantoyl-adenylate intermediate. The polypeptide is Pantothenate synthetase (Endomicrobium trichonymphae).